Consider the following 126-residue polypeptide: Aspartate 1-decarboxylase (126 aa).

Ser-25 acts as the Schiff-base intermediate with substrate; via pyruvic acid in catalysis. Pyruvic acid (Ser) is present on Ser-25. Thr-57 contributes to the substrate binding site. Catalysis depends on Tyr-58, which acts as the Proton donor. 73 to 75 (GGA) provides a ligand contact to substrate.

The protein belongs to the PanD family. In terms of assembly, heterooctamer of four alpha and four beta subunits. It depends on pyruvate as a cofactor. In terms of processing, is synthesized initially as an inactive proenzyme, which is activated by self-cleavage at a specific serine bond to produce a beta-subunit with a hydroxyl group at its C-terminus and an alpha-subunit with a pyruvoyl group at its N-terminus.

It is found in the cytoplasm. It carries out the reaction L-aspartate + H(+) = beta-alanine + CO2. Its pathway is cofactor biosynthesis; (R)-pantothenate biosynthesis; beta-alanine from L-aspartate: step 1/1. Catalyzes the pyruvoyl-dependent decarboxylation of aspartate to produce beta-alanine. This Xanthomonas campestris pv. campestris (strain B100) protein is Aspartate 1-decarboxylase.